The primary structure comprises 969 residues: RNA polymerase-associated protein RapA (969 aa).

The 178-residue stretch at 162-339 (EVGQRVAPRV…FARLALLDAD (178 aa)) folds into the Helicase ATP-binding domain. 175–182 (DEVGLGKT) serves as a coordination point for ATP. Positions 285-288 (DEAH) match the DEAH box motif. The Helicase C-terminal domain maps to 492–663 (RIEWLITFLK…GFLKNPQAVG (172 aa)).

Belongs to the SNF2/RAD54 helicase family. RapA subfamily. As to quaternary structure, interacts with the RNAP. Has a higher affinity for the core RNAP than for the holoenzyme. Its ATPase activity is stimulated by binding to RNAP.

Its function is as follows. Transcription regulator that activates transcription by stimulating RNA polymerase (RNAP) recycling in case of stress conditions such as supercoiled DNA or high salt concentrations. Probably acts by releasing the RNAP, when it is trapped or immobilized on tightly supercoiled DNA. Does not activate transcription on linear DNA. Probably not involved in DNA repair. The sequence is that of RNA polymerase-associated protein RapA from Actinobacillus pleuropneumoniae serotype 7 (strain AP76).